The following is a 186-amino-acid chain: ATP-dependent protease subunit HslV (186 aa).

The active site involves T14. Na(+) contacts are provided by A168, C171, and T174.

Belongs to the peptidase T1B family. HslV subfamily. A double ring-shaped homohexamer of HslV is capped on each side by a ring-shaped HslU homohexamer. The assembly of the HslU/HslV complex is dependent on binding of ATP.

The protein localises to the cytoplasm. The enzyme catalyses ATP-dependent cleavage of peptide bonds with broad specificity.. With respect to regulation, allosterically activated by HslU binding. Protease subunit of a proteasome-like degradation complex believed to be a general protein degrading machinery. In Bradyrhizobium diazoefficiens (strain JCM 10833 / BCRC 13528 / IAM 13628 / NBRC 14792 / USDA 110), this protein is ATP-dependent protease subunit HslV.